Here is a 103-residue protein sequence, read N- to C-terminus: Large ribosomal subunit protein bL21 (103 aa).

Belongs to the bacterial ribosomal protein bL21 family. Part of the 50S ribosomal subunit. Contacts protein L20.

In terms of biological role, this protein binds to 23S rRNA in the presence of protein L20. The polypeptide is Large ribosomal subunit protein bL21 (Aliivibrio fischeri (strain ATCC 700601 / ES114) (Vibrio fischeri)).